The sequence spans 213 residues: LexA repressor 2 (213 aa).

Residues 27–47 constitute a DNA-binding region (H-T-H motif); the sequence is QTEIARAFGFKGVRAAQYHLE. Catalysis depends on for autocatalytic cleavage activity residues serine 133 and lysine 170.

This sequence belongs to the peptidase S24 family. In terms of assembly, homodimer.

It carries out the reaction Hydrolysis of Ala-|-Gly bond in repressor LexA.. In terms of biological role, represses a number of genes involved in the response to DNA damage (SOS response), including recA and lexA. In the presence of single-stranded DNA, RecA interacts with LexA causing an autocatalytic cleavage which disrupts the DNA-binding part of LexA, leading to derepression of the SOS regulon and eventually DNA repair. This Xanthomonas oryzae pv. oryzae (strain KACC10331 / KXO85) protein is LexA repressor 2.